A 418-amino-acid polypeptide reads, in one-letter code: CinA-like protein (418 aa).

Belongs to the CinA family.

This chain is CinA-like protein, found in Flavobacterium psychrophilum (strain ATCC 49511 / DSM 21280 / CIP 103535 / JIP02/86).